Here is a 153-residue protein sequence, read N- to C-terminus: D-aminoacyl-tRNA deacylase (153 aa).

Residues 137–138 (GP) carry the Gly-cisPro motif, important for rejection of L-amino acids motif.

Belongs to the DTD family. In terms of assembly, homodimer.

The protein resides in the cytoplasm. It catalyses the reaction glycyl-tRNA(Ala) + H2O = tRNA(Ala) + glycine + H(+). The enzyme catalyses a D-aminoacyl-tRNA + H2O = a tRNA + a D-alpha-amino acid + H(+). In terms of biological role, an aminoacyl-tRNA editing enzyme that deacylates mischarged D-aminoacyl-tRNAs. Also deacylates mischarged glycyl-tRNA(Ala), protecting cells against glycine mischarging by AlaRS. Acts via tRNA-based rather than protein-based catalysis; rejects L-amino acids rather than detecting D-amino acids in the active site. By recycling D-aminoacyl-tRNA to D-amino acids and free tRNA molecules, this enzyme counteracts the toxicity associated with the formation of D-aminoacyl-tRNA entities in vivo and helps enforce protein L-homochirality. The polypeptide is D-aminoacyl-tRNA deacylase (Herpetosiphon aurantiacus (strain ATCC 23779 / DSM 785 / 114-95)).